Here is a 96-residue protein sequence, read N- to C-terminus: Co-chaperonin GroES (96 aa).

It belongs to the GroES chaperonin family. In terms of assembly, heptamer of 7 subunits arranged in a ring. Interacts with the chaperonin GroEL.

Its subcellular location is the cytoplasm. Functionally, together with the chaperonin GroEL, plays an essential role in assisting protein folding. The GroEL-GroES system forms a nano-cage that allows encapsulation of the non-native substrate proteins and provides a physical environment optimized to promote and accelerate protein folding. GroES binds to the apical surface of the GroEL ring, thereby capping the opening of the GroEL channel. The protein is Co-chaperonin GroES of Shewanella pealeana (strain ATCC 700345 / ANG-SQ1).